The chain runs to 379 residues: Arginine biosynthesis bifunctional protein ArgJ (379 aa).

Substrate-binding residues include T140, K160, T171, E249, N374, and T379. T171 functions as the Nucleophile in the catalytic mechanism.

The protein belongs to the ArgJ family. Heterotetramer of two alpha and two beta chains.

The protein localises to the cytoplasm. It catalyses the reaction N(2)-acetyl-L-ornithine + L-glutamate = N-acetyl-L-glutamate + L-ornithine. The catalysed reaction is L-glutamate + acetyl-CoA = N-acetyl-L-glutamate + CoA + H(+). It participates in amino-acid biosynthesis; L-arginine biosynthesis; L-ornithine and N-acetyl-L-glutamate from L-glutamate and N(2)-acetyl-L-ornithine (cyclic): step 1/1. It functions in the pathway amino-acid biosynthesis; L-arginine biosynthesis; N(2)-acetyl-L-ornithine from L-glutamate: step 1/4. Functionally, catalyzes two activities which are involved in the cyclic version of arginine biosynthesis: the synthesis of N-acetylglutamate from glutamate and acetyl-CoA as the acetyl donor, and of ornithine by transacetylation between N(2)-acetylornithine and glutamate. This chain is Arginine biosynthesis bifunctional protein ArgJ, found in Archaeoglobus fulgidus (strain ATCC 49558 / DSM 4304 / JCM 9628 / NBRC 100126 / VC-16).